Consider the following 437-residue polypeptide: Triacylglycerol lipase (437 aa).

The region spanning 1–100 is the PE domain; the sequence is MVSYVVALPE…AELANASLLQ (100 aa). The interval 101-206 is linker; that stretch reads SEFASGIGNG…GNSPPPLLNS (106 aa). Residues 207–437 are lipase; the sequence is LLGQTVQYTT…QINQQLGIAA (231 aa). An Involved in the stabilization of the negatively charged intermediate by the formation of the oxyanion hole motif is present at residues 239-241; the sequence is HGG. Residues Ser309, Asp383, and His413 contribute to the active site.

It in the N-terminal section; belongs to the mycobacterial PE family. PGRS subfamily. The protein in the C-terminal section; belongs to the 'GDXG' lipolytic enzyme family. Forms aggregates via its PE domain. Post-translationally, upon export, the PE domain is removed by proteolytic cleavage. Cleavage occurs at the cell surface and is not required for secretion. Cleaved after Gly-149 by the aspartic protease PecA. May also be cleaved before Leu-98 and after Ala-136.

Its subcellular location is the cytoplasm. It localises to the secreted. The protein localises to the cell wall. The protein resides in the cell surface. The catalysed reaction is a triacylglycerol + H2O = a diacylglycerol + a fatty acid + H(+). It carries out the reaction 1,2,3-tri-(9Z-octadecenoyl)-glycerol + H2O = di-(9Z)-octadecenoylglycerol + (9Z)-octadecenoate + H(+). It catalyses the reaction an acetyl ester + H2O = an aliphatic alcohol + acetate + H(+). The enzyme catalyses a butanoate ester + H2O = an aliphatic alcohol + butanoate + H(+). The catalysed reaction is a hexanoate ester + H2O = an aliphatic alcohol + hexanoate + H(+). It carries out the reaction an octanoate ester + H2O = an aliphatic alcohol + octanoate + H(+). It catalyses the reaction a dodecanoate ester + H2O = an aliphatic alcohol + dodecanoate + H(+). The enzyme catalyses a tetradecanoate ester + H2O = an aliphatic alcohol + tetradecanoate + H(+). The catalysed reaction is hexadecanoate ester + H2O = an aliphatic alcohol + hexadecanoate + H(+). It carries out the reaction octadecanoate ester + H2O = an aliphatic alcohol + octadecanoate + H(+). It catalyses the reaction 1-butyrylglycerol + H2O = butanoate + glycerol + H(+). The enzyme catalyses 1,2,3-tributanoylglycerol + H2O = dibutanoylglycerol + butanoate + H(+). With respect to regulation, PE domain down-regulates lipase activity. Cleavage by PecA does not affect surface localization and lipase activity. Its activity is regulated as follows. Inhibited by diethyl-p-nitrophenyl phosphate (E-600) at 0.5 uM, by phenylmethanesulfonyl fluoride at 5 mM and by polyethylene glycol sorbitan monolaurate (Tween 20). Also inhibited by CaCl(2), CoCl(2), MnCl(2), ZnCl(2) and MgCl(2). Inhibited by several hydrazides compounds. Stimulated slightly by SDS at concentrations up to 2 mM, above which the activity is severely inhibited. In terms of biological role, catalyzes the hydrolysis of both intracellular and extracellular triacylglycerol (TAG). In vitro, can also hydrolyze p-nitrophenyl (pNP) esters with various chain lengths, including pNP-acetate (C2), pNP-butyrate (C4), pNP-caproate (C6), pNP-caprylate (C8), pNP-laurate (C12), pNP-myristate (C14), pNP-palmitate (C16) and pNP-stearate (C18). Also hydrolyzes monobutyrin, tributyrin and trioctanoin. Overexpression results in increase of virulence characterized by reduced survival of infected mouse and increased burden of bacilli in the lungs. Hydrolyzes internal or host-derived TAG depending on its localization. Functionally, hydrolyzes TAG that accumulates within mycobacterial intracytosolic lipid inclusions (ILI). Probably responsible for the utilization of stored long-chain TAG during the dormancy and reactivation stages of the pathogen. Hydrolyzes host-derived TAG. The polypeptide is Triacylglycerol lipase (Mycobacterium tuberculosis (strain ATCC 25618 / H37Rv)).